Reading from the N-terminus, the 1366-residue chain is Agglutinin-like protein 6 (1366 aa).

Residues 1-18 (MKTVILLHLFFYCTIAMA) form the signal peptide. 4 disulfide bridges follow: Cys-74-Cys-151, Cys-97-Cys-113, Cys-206-Cys-301, and Cys-228-Cys-257. A glycan (N-linked (GlcNAc...) asparagine) is linked at Asn-294. 6 ALS repeats span residues 368–399 (TTITTSYVGISTSLSTKTATIGGTATVVVDVP), 404–435 (TTITSIWTGSATTSSTYTNPTDSIDTVVVQVP), 441–472 (VTTTQFWSGSVPTTETVTTGPQGTDSVIIKEP), 477–508 (VTTTEFWSESFATTETVTNGPEGTDSVIVREP), 513–544 (VTTTEFWSESFATTETVTNGPEGTDSVIVREP), and 549–580 (VTTTEFWSESFATTETITTGPLGTDSIVIHDP). The interval 449–470 (GSVPTTETVTTGPQGTDSVIIK) is disordered. Over residues 451–464 (VPTTETVTTGPQGT) the composition is skewed to low complexity. Disordered stretches follow at residues 583–658 (ESSS…TSES), 758–780 (LSSDTSSYYPSSTISPSDDFPHT), and 804–833 (VSLTSDPASSFDSSSSLNSDSSSSPSSDQS). N-linked (GlcNAc...) asparagine glycosylation is present at Asn-596. 2 stretches are compositionally biased toward low complexity: residues 758-775 (LSSDTSSYYPSSTISPSD) and 805-833 (SLTSDPASSFDSSSSLNSDSSSSPSSDQS). Asn-866 carries an N-linked (GlcNAc...) asparagine glycan. Disordered regions lie at residues 874–915 (ESES…STVT), 928–976 (TGMP…TSAS), 996–1040 (SETS…KESS), 1081–1130 (EDNE…VSSV), and 1158–1218 (ETSL…STNN). Low complexity-rich tracts occupy residues 875–889 (SESSSVASPSMASES), 898–915 (SESTDTTSSIGTDSSTVT), and 940–958 (TSDVTTTSSFVASSTPTSA). Polar residues predominate over residues 959–969 (EQSITDNPNID). Residues 996–1021 (SETSTLSSDDSTSSDTSISSTTNSDT) are compositionally biased toward low complexity. 2 stretches are compositionally biased toward polar residues: residues 1022–1040 (GNINAGSSHTSTASIKESS) and 1085–1107 (PNTFTSTPSSHSEIFSSDNSVLS). Composition is skewed to low complexity over residues 1121–1130 (VTDTTTVSSV) and 1158–1177 (ETSLRSTSSSSNHATESSGT). Polar residues-rich tracts occupy residues 1192–1202 (TSTDNRLSYST) and 1209–1218 (TYANSGSTNN). Asn-1273 carries N-linked (GlcNAc...) asparagine glycosylation. Residue Ser-1345 is the site of GPI-anchor amidated serine attachment. A propeptide spans 1346–1366 (SATKHPSWLLKFISVALFFFL) (removed in mature form).

Belongs to the ALS family. The GPI-anchor is attached to the protein in the endoplasmic reticulum and serves to target the protein to the cell surface. There, the glucosamine-inositol phospholipid moiety is cleaved off and the GPI-modified mannoprotein is covalently attached via its lipidless GPI glycan remnant to the 1,6-beta-glucan of the outer cell wall layer.

It localises to the cell membrane. The protein localises to the secreted. Its subcellular location is the cell wall. Cell surface adhesion protein which mediates both yeast-to-host tissue adherence and yeast aggregation. Plays an important role in the pathogenesis of C.albicans infections. This Candida albicans (strain SC5314 / ATCC MYA-2876) (Yeast) protein is Agglutinin-like protein 6 (ALS6).